Consider the following 421-residue polypeptide: DNA (cytosine-5)-methyltransferase 3-like (421 aa).

Over residues 1–14 (MGSRETPSSCSKTL) the composition is skewed to polar residues. The segment at 1–39 (MGSRETPSSCSKTLETLDLETSDSSSPDADSPLEEQWLK) is disordered. Residues 75–207 (EVKVNRRSIE…LKAFHDQEGA (133 aa)) enclose the ADD domain. The GATA-type; atypical zinc-finger motif lies at 86–116 (ICLCCGTLQVYTRHPLFEGGLCAPCKDKFLE). The PHD-type; atypical zinc-finger motif lies at 127–183 (QSYCTICCSGGTLFICESPDCTRCYCFECVDILVGPGTSERINAMACWVCFLCLPFS).

As to quaternary structure, homodimer. Heterotetramer composed of 1 DNMT3A homodimer and 2 DNMT3L subunits (DNMT3L-DNMT3A-DNMT3A-DNMT3L). Interacts with histone H3 (via N-terminus); interaction is strongly inhibited by methylation at lysine 4 (H3K4me). Interacts with EZH2; the interaction is direct. Interacts with SPOCD1. As to expression, expressed in testis, thymus, ovary, and heart.

It is found in the nucleus. In terms of biological role, catalytically inactive regulatory factor of DNA methyltransferases that can either promote or inhibit DNA methylation depending on the context. Essential for the function of DNMT3A and DNMT3B: activates DNMT3A and DNMT3B by binding to their catalytic domain. Acts by accelerating the binding of DNA and S-adenosyl-L-methionine (AdoMet) to the methyltransferases and dissociates from the complex after DNA binding to the methyltransferases. Recognizes unmethylated histone H3 lysine 4 (H3K4me0) and induces de novo DNA methylation by recruitment or activation of DNMT3. Plays a key role in embryonic stem cells and germ cells. In germ cells, required for the methylation of imprinted loci together with DNMT3A. In male germ cells, specifically required to methylate retrotransposons, preventing their mobilization. Plays a key role in embryonic stem cells (ESCs) by acting both as an positive and negative regulator of DNA methylation. While it promotes DNA methylation of housekeeping genes together with DNMT3A and DNMT3B, it also acts as an inhibitor of DNA methylation at the promoter of bivalent genes. Interacts with the EZH2 component of the PRC2/EED-EZH2 complex, preventing interaction of DNMT3A and DNMT3B with the PRC2/EED-EZH2 complex, leading to maintain low methylation levels at the promoters of bivalent genes. Promotes differentiation of ESCs into primordial germ cells by inhibiting DNA methylation at the promoter of RHOX5, thereby activating its expression. This chain is DNA (cytosine-5)-methyltransferase 3-like (Dnmt3l), found in Mus musculus (Mouse).